The following is a 226-amino-acid chain: Protein B (226 aa).

The tract at residues 37 to 100 is igG constant region-binding; that stretch reads DNVQGTDYEK…FSTQHLANKV (64 aa). 3 consecutive repeats follow at residues 158–168, 169–179, and 180–190; these read TKSKLDKEIWN, TRFTRDKKVLN, and VKEFKVYNTLN.

It is found in the secreted. Its function is as follows. Protein B belongs to the group of bacterial Fc-binding protein. The sequence is that of Protein B from Streptococcus agalactiae.